The primary structure comprises 567 residues: MVISTNELAALTVVLLATGVLFYANSTRRAPLPPGPRGLPLLGNLFQFDVMRPYPQYLKWAQKYGPVFSVKLGGQRIIVLNSSEAADELLATRSKLYSSRESPHVGFDLVSDQQRMLFMPYGREWKIARKNVHSLLGPGPSKQMGKTQDLESRVMLHDLLCHGETSITEEFVEGPRGEVPERHWFSIVRRYTTSVVMMLVYGRRIHRIVGNPELHKVYDLMSNFTHVSQPGRYMVDALPVLRWLPDMLAPWRAEGRKMHKREMDFWGKLFSDSRTAFLNGTGLNGFVQSYLRARTEAGLEDLPGNGATEDAAGWMRDKLITYTAVTIVEAGSDTTSTGVFSFVLLMLSNPDALQRAKEEMDAVVGSSRMPDWEDEDRLPWLTACIKETLRRAPPAPLGIPHKVDEDDVYNGYLIPKGSTVIGNIWAIHMDPVRYPDPTAFKPERFYNPDGKLNWASGPDAHNRDHYIFGWGRRFCSGKYLAEASMFIVLSRLIWGFDFYAASDPQTGKARLPDVSDVDTFTDGLVTAPKIYPVGFKPRSEKHAEMIKASYRDVQNDWQSMGLAGDER.

The chain crosses the membrane as a helical span at residues 7-24 (ELAALTVVLLATGVLFYA). N-linked (GlcNAc...) asparagine glycosylation is found at Asn-25, Asn-81, Asn-223, and Asn-279. Cys-475 is a binding site for heme.

The protein belongs to the cytochrome P450 family. The cofactor is heme.

It is found in the membrane. It functions in the pathway secondary metabolite biosynthesis. Cytochrome P450 monooxygenase that is able to use 4-ethoxybenzoic acid as a substrate for oxidation. The sequence is that of Cytochrome P450 monooxygenase 69 from Postia placenta (strain ATCC 44394 / Madison 698-R) (Brown rot fungus).